Reading from the N-terminus, the 274-residue chain is tRNA pseudouridine synthase A (274 aa).

Catalysis depends on Asp51, which acts as the Nucleophile. Tyr109 serves as a coordination point for substrate.

The protein belongs to the tRNA pseudouridine synthase TruA family. In terms of assembly, homodimer.

The catalysed reaction is uridine(38/39/40) in tRNA = pseudouridine(38/39/40) in tRNA. Formation of pseudouridine at positions 38, 39 and 40 in the anticodon stem and loop of transfer RNAs. The polypeptide is tRNA pseudouridine synthase A (Acidovorax ebreus (strain TPSY) (Diaphorobacter sp. (strain TPSY))).